The sequence spans 266 residues: L-aspartate dehydrogenase (266 aa).

Positions 123 and 189 each coordinate NAD(+). His219 is a catalytic residue.

The protein belongs to the L-aspartate dehydrogenase family.

It carries out the reaction L-aspartate + NADP(+) + H2O = oxaloacetate + NH4(+) + NADPH + H(+). The enzyme catalyses L-aspartate + NAD(+) + H2O = oxaloacetate + NH4(+) + NADH + H(+). The protein operates within cofactor biosynthesis; NAD(+) biosynthesis; iminoaspartate from L-aspartate (dehydrogenase route): step 1/1. Specifically catalyzes the NAD or NADP-dependent dehydrogenation of L-aspartate to iminoaspartate. This is L-aspartate dehydrogenase from Cupriavidus necator (strain ATCC 17699 / DSM 428 / KCTC 22496 / NCIMB 10442 / H16 / Stanier 337) (Ralstonia eutropha).